We begin with the raw amino-acid sequence, 316 residues long: MQILLANPRGFCAGVDRAISIVENALAIYGAPIYVRHEVVHNRYVVDSLRQRGAIFIEQISEVPDGAILIFSAHGVSQAVRNEAKSRDLTVFDATCPLVTKVHMEVARASRRGEESILIGHAGHPEVEGTMGQYSNPEGGMYLVESPEDVWTLNVKNEGKLSFMTQTTLSVDDTSDVIDALRKRFPKIVGPRKDDICYATTNRQEAVRALAEQADVVLVVGSKNSSNSNRLAELAQRMGRTAFLIDDAADIQEAWVKEAACVGVTAGASAPDILVQNVIARLREFGGGEAVTLEGREENIVFEVPKELRVDVREVE.

Cysteine 12 contributes to the [4Fe-4S] cluster binding site. The (2E)-4-hydroxy-3-methylbut-2-enyl diphosphate site is built by histidine 41 and histidine 74. 2 residues coordinate dimethylallyl diphosphate: histidine 41 and histidine 74. Positions 41 and 74 each coordinate isopentenyl diphosphate. Residue cysteine 96 participates in [4Fe-4S] cluster binding. Histidine 124 lines the (2E)-4-hydroxy-3-methylbut-2-enyl diphosphate pocket. Dimethylallyl diphosphate is bound at residue histidine 124. Histidine 124 is an isopentenyl diphosphate binding site. The active-site Proton donor is the glutamate 126. Threonine 167 serves as a coordination point for (2E)-4-hydroxy-3-methylbut-2-enyl diphosphate. A [4Fe-4S] cluster-binding site is contributed by cysteine 197. The (2E)-4-hydroxy-3-methylbut-2-enyl diphosphate site is built by serine 225, serine 226, asparagine 227, and serine 269. Serine 225, serine 226, asparagine 227, and serine 269 together coordinate dimethylallyl diphosphate. Residues serine 225, serine 226, asparagine 227, and serine 269 each coordinate isopentenyl diphosphate.

The protein belongs to the IspH family. In terms of assembly, homodimer. Requires [4Fe-4S] cluster as cofactor.

It carries out the reaction isopentenyl diphosphate + 2 oxidized [2Fe-2S]-[ferredoxin] + H2O = (2E)-4-hydroxy-3-methylbut-2-enyl diphosphate + 2 reduced [2Fe-2S]-[ferredoxin] + 2 H(+). The enzyme catalyses dimethylallyl diphosphate + 2 oxidized [2Fe-2S]-[ferredoxin] + H2O = (2E)-4-hydroxy-3-methylbut-2-enyl diphosphate + 2 reduced [2Fe-2S]-[ferredoxin] + 2 H(+). It participates in isoprenoid biosynthesis; dimethylallyl diphosphate biosynthesis; dimethylallyl diphosphate from (2E)-4-hydroxy-3-methylbutenyl diphosphate: step 1/1. It functions in the pathway isoprenoid biosynthesis; isopentenyl diphosphate biosynthesis via DXP pathway; isopentenyl diphosphate from 1-deoxy-D-xylulose 5-phosphate: step 6/6. Its function is as follows. Catalyzes the conversion of 1-hydroxy-2-methyl-2-(E)-butenyl 4-diphosphate (HMBPP) into a mixture of isopentenyl diphosphate (IPP) and dimethylallyl diphosphate (DMAPP). Acts in the terminal step of the DOXP/MEP pathway for isoprenoid precursor biosynthesis. The polypeptide is 4-hydroxy-3-methylbut-2-enyl diphosphate reductase (Salmonella agona (strain SL483)).